Here is a 271-residue protein sequence, read N- to C-terminus: ATP synthase subunit a (271 aa).

Helical transmembrane passes span 31–51 (WDTI…GLYM), 89–109 (FVAP…WIGV), 124–144 (DINL…IVSL), 186–206 (IFSG…VLWL), and 216–236 (LGVG…YYAF). The disordered stretch occupies residues 247–271 (DEHADGGDSSSRQASPTPLPAGQVR).

It belongs to the ATPase A chain family. In terms of assembly, F-type ATPases have 2 components, CF(1) - the catalytic core - and CF(0) - the membrane proton channel. CF(1) has five subunits: alpha(3), beta(3), gamma(1), delta(1), epsilon(1). CF(0) has three main subunits: a(1), b(2) and c(9-12). The alpha and beta chains form an alternating ring which encloses part of the gamma chain. CF(1) is attached to CF(0) by a central stalk formed by the gamma and epsilon chains, while a peripheral stalk is formed by the delta and b chains.

Its subcellular location is the cell membrane. Functionally, key component of the proton channel; it plays a direct role in the translocation of protons across the membrane. The sequence is that of ATP synthase subunit a from Acidothermus cellulolyticus (strain ATCC 43068 / DSM 8971 / 11B).